We begin with the raw amino-acid sequence, 123 residues long: Secreted RxLR effector protein RXLR-C21 (123 aa).

The N-terminal stretch at 1–23 (MRLHLLVLSVIVVSLLVSDNAHA) is a signal peptide. A RxLR-dEER motif is present at residues 32 to 65 (RALRETPINGLVTNQLAVSRNLTPAKFITNSEER). The helical transmembrane segment at 101-121 (VTTICSIVLFVMVFGCLYKIF) threads the bilayer.

Belongs to the RxLR effector family.

The protein resides in the secreted. The protein localises to the host endoplasmic reticulum membrane. In terms of biological role, secreted effector that does not suppress pattern-triggered immunity (PTI) in plant host. The polypeptide is Secreted RxLR effector protein RXLR-C21 (Plasmopara halstedii (Downy mildew of sunflower)).